Here is a 150-residue protein sequence, read N- to C-terminus: Large ribosomal subunit protein bL9 (150 aa).

It belongs to the bacterial ribosomal protein bL9 family.

Its function is as follows. Binds to the 23S rRNA. The polypeptide is Large ribosomal subunit protein bL9 (Vibrio campbellii (strain ATCC BAA-1116)).